We begin with the raw amino-acid sequence, 90 residues long: Cell division protein CrgA (90 aa).

The tract at residues 1 to 25 (MPKARVTKNETAPVSSNPSANRTPV) is disordered. The segment covering 9–22 (NETAPVSSNPSANR) has biased composition (polar residues). 2 consecutive transmembrane segments (helical) span residues 38–58 (VIMF…YLVG) and 67–87 (LGAW…LMTM).

This sequence belongs to the CrgA family.

Its subcellular location is the cell membrane. In terms of biological role, involved in cell division. The chain is Cell division protein CrgA from Corynebacterium glutamicum (strain ATCC 13032 / DSM 20300 / JCM 1318 / BCRC 11384 / CCUG 27702 / LMG 3730 / NBRC 12168 / NCIMB 10025 / NRRL B-2784 / 534).